The sequence spans 170 residues: Photosystem II extrinsic protein V (170 aa).

A signal peptide spans M1 to A33. Residues C70, C73, H74, and M137 each coordinate heme c.

This sequence belongs to the cytochrome c family. PsbV subfamily. In terms of assembly, PSII is composed of 1 copy each of membrane proteins PsbA, PsbB, PsbC, PsbD, PsbE, PsbF, PsbH, PsbI, PsbJ, PsbK, PsbL, PsbM, PsbT, PsbX, PsbY, PsbZ, Psb30/Ycf12, peripheral proteins PsbO, CyanoQ (PsbQ), PsbU, PsbV and a large number of cofactors. It forms dimeric complexes. Heme c is required as a cofactor.

The protein resides in the cellular thylakoid membrane. Functionally, one of the extrinsic, lumenal subunits of photosystem II (PSII). PSII is a light-driven water plastoquinone oxidoreductase, using light energy to abstract electrons from H(2)O, generating a proton gradient subsequently used for ATP formation. The extrinsic proteins stabilize the structure of photosystem II oxygen-evolving complex (OEC), the ion environment of oxygen evolution and protect the OEC against heat-induced inactivation. Low-potential cytochrome c that plays a role in the OEC of PSII. The protein is Photosystem II extrinsic protein V of Parasynechococcus marenigrum (strain WH8102).